The chain runs to 162 residues: Phosphopantetheine adenylyltransferase (162 aa).

Substrate is bound at residue serine 11. ATP-binding positions include 11-12 (SF) and histidine 19. Substrate is bound by residues lysine 43, valine 76, and arginine 90. Residues 91-93 (GLR), glutamate 101, and 126-132 (HLYISSS) each bind ATP.

This sequence belongs to the bacterial CoaD family. In terms of assembly, homohexamer. Requires Mg(2+) as cofactor.

It is found in the cytoplasm. It carries out the reaction (R)-4'-phosphopantetheine + ATP + H(+) = 3'-dephospho-CoA + diphosphate. The protein operates within cofactor biosynthesis; coenzyme A biosynthesis; CoA from (R)-pantothenate: step 4/5. Reversibly transfers an adenylyl group from ATP to 4'-phosphopantetheine, yielding dephospho-CoA (dPCoA) and pyrophosphate. In Streptococcus pneumoniae (strain JJA), this protein is Phosphopantetheine adenylyltransferase.